We begin with the raw amino-acid sequence, 563 residues long: Arginine--tRNA ligase (563 aa).

The 'HIGH' region motif lies at 121–131 (PNIAKPFSIGH).

The protein belongs to the class-I aminoacyl-tRNA synthetase family. Monomer.

It is found in the cytoplasm. It catalyses the reaction tRNA(Arg) + L-arginine + ATP = L-arginyl-tRNA(Arg) + AMP + diphosphate. This Streptococcus mutans serotype c (strain ATCC 700610 / UA159) protein is Arginine--tRNA ligase.